Consider the following 147-residue polypeptide: uncharacterized protein (147 aa).

This is an uncharacterized protein from Schizosaccharomyces pombe (strain 972 / ATCC 24843) (Fission yeast).